We begin with the raw amino-acid sequence, 492 residues long: Histone-lysine N-methyltransferase ASHH1 (492 aa).

One can recognise an AWS domain in the interval 36–87 (EDISICECKFDFGDPDSACGERCLNVITNTECTPGYCPCGVYCKNQKFQKCE). The SET domain occupies 84 to 206 (QKCEYAKTKL…PRTELAYDYN (123 aa)). The Post-SET domain maps to 213–229 (AKVRCLCGAVACSGFLG). Residues 259-340 (SAEDELTSEP…NSQEDSSPKT (82 aa)) are disordered. The span at 266 to 275 (SEPSKNGESN) shows a compositional bias: polar residues. Basic and acidic residues predominate over residues 277-290 (NEEKEKDISTENHL). Residues 291–306 (ESTALNIQQQSDSTPT) show a composition bias toward polar residues. Residues 317–326 (VKTETSEDMK) show a composition bias toward basic and acidic residues. Residues 328–339 (LSQNSQEDSSPK) are compositionally biased toward polar residues.

This sequence belongs to the class V-like SAM-binding methyltransferase superfamily. Histone-lysine methyltransferase family. SET2 subfamily.

The protein resides in the nucleus. It is found in the chromosome. Its subcellular location is the centromere. It carries out the reaction L-lysyl(4)-[histone H3] + 3 S-adenosyl-L-methionine = N(6),N(6),N(6)-trimethyl-L-lysyl(4)-[histone H3] + 3 S-adenosyl-L-homocysteine + 3 H(+). Its function is as follows. Histone methyltransferase involved in regulation of flowering time. Required for the expression of the SOC1/AGL20 gene. Required for histone H3 trimethylation on 'Lys-4' (H3K4me3) at the SOC1 locus. Prevents trimethylation on 'Lys-27' (H3K27me3) at the same locus. The polypeptide is Histone-lysine N-methyltransferase ASHH1 (ASHH1) (Arabidopsis thaliana (Mouse-ear cress)).